A 258-amino-acid chain; its full sequence is 4-hydroxy-tetrahydrodipicolinate reductase (258 aa).

NAD(+) contacts are provided by residues G8–M13, G93–T95, and A117–F120. The active-site Proton donor/acceptor is H149. Residue H150 coordinates (S)-2,3,4,5-tetrahydrodipicolinate. Residue K153 is the Proton donor of the active site. G159–T160 lines the (S)-2,3,4,5-tetrahydrodipicolinate pocket.

Belongs to the DapB family.

It is found in the cytoplasm. The enzyme catalyses (S)-2,3,4,5-tetrahydrodipicolinate + NAD(+) + H2O = (2S,4S)-4-hydroxy-2,3,4,5-tetrahydrodipicolinate + NADH + H(+). It catalyses the reaction (S)-2,3,4,5-tetrahydrodipicolinate + NADP(+) + H2O = (2S,4S)-4-hydroxy-2,3,4,5-tetrahydrodipicolinate + NADPH + H(+). It participates in amino-acid biosynthesis; L-lysine biosynthesis via DAP pathway; (S)-tetrahydrodipicolinate from L-aspartate: step 4/4. In terms of biological role, catalyzes the conversion of 4-hydroxy-tetrahydrodipicolinate (HTPA) to tetrahydrodipicolinate. The protein is 4-hydroxy-tetrahydrodipicolinate reductase of Thermomicrobium roseum (strain ATCC 27502 / DSM 5159 / P-2).